A 328-amino-acid chain; its full sequence is Biotin synthase (328 aa).

Residues 41 to 260 (TAIETASLLS…VALARILMPA (220 aa)) enclose the Radical SAM core domain. Residues cysteine 56, cysteine 60, and cysteine 63 each coordinate [4Fe-4S] cluster. The [2Fe-2S] cluster site is built by cysteine 100, cysteine 131, cysteine 191, and arginine 264.

It belongs to the radical SAM superfamily. Biotin synthase family. In terms of assembly, homodimer. The cofactor is [4Fe-4S] cluster. [2Fe-2S] cluster is required as a cofactor.

The enzyme catalyses (4R,5S)-dethiobiotin + (sulfur carrier)-SH + 2 reduced [2Fe-2S]-[ferredoxin] + 2 S-adenosyl-L-methionine = (sulfur carrier)-H + biotin + 2 5'-deoxyadenosine + 2 L-methionine + 2 oxidized [2Fe-2S]-[ferredoxin]. Its pathway is cofactor biosynthesis; biotin biosynthesis; biotin from 7,8-diaminononanoate: step 2/2. Functionally, catalyzes the conversion of dethiobiotin (DTB) to biotin by the insertion of a sulfur atom into dethiobiotin via a radical-based mechanism. In Cereibacter sphaeroides (strain ATCC 17023 / DSM 158 / JCM 6121 / CCUG 31486 / LMG 2827 / NBRC 12203 / NCIMB 8253 / ATH 2.4.1.) (Rhodobacter sphaeroides), this protein is Biotin synthase.